The following is a 301-amino-acid chain: MFFRNLTLFRFPTTLDFSQIDTLLPPVQLKPVGPLEMSSRGFISPFGRDEQGVLSHRLEDFLWLTVGGEDKILPGAVVNDLLERKVAEIEEKEGRRPSGKARKRLKDDLIHELLPRAFVKSSRTDAILDLQHGYIAVNSSSRKSGENVMSEIRGALGSFPALPLNAEVAPRAILTGWIAGEPLPEGLSLGEECEMKDPIEGGAVVKCQHQELRGDEIDKHLEAGKQVTKLALVLDDNLSFVLGDDLVIRKLKFLDGALDQLEHSEDDGARAELDARFTLMSAEIRRLFLLLETALKLSKAE.

This sequence belongs to the RdgC family.

It is found in the cytoplasm. Its subcellular location is the nucleoid. Its function is as follows. May be involved in recombination. The chain is Recombination-associated protein RdgC from Xanthomonas oryzae pv. oryzae (strain KACC10331 / KXO85).